A 316-amino-acid chain; its full sequence is tRNA dimethylallyltransferase (316 aa).

An ATP-binding site is contributed by 17–24; sequence GPTASGKT. 19 to 24 lines the substrate pocket; sequence TASGKT. Interaction with substrate tRNA stretches follow at residues 42–45, 166–170, and 247–252; these read DSAL, QRLSR, and RCVGYR.

It belongs to the IPP transferase family. As to quaternary structure, monomer. The cofactor is Mg(2+).

The enzyme catalyses adenosine(37) in tRNA + dimethylallyl diphosphate = N(6)-dimethylallyladenosine(37) in tRNA + diphosphate. Functionally, catalyzes the transfer of a dimethylallyl group onto the adenine at position 37 in tRNAs that read codons beginning with uridine, leading to the formation of N6-(dimethylallyl)adenosine (i(6)A). The protein is tRNA dimethylallyltransferase of Salmonella paratyphi A (strain ATCC 9150 / SARB42).